The chain runs to 246 residues: 4'-phosphopantetheinyl transferase Svp (246 aa).

The span at 223–232 shows a compositional bias: low complexity; it reads AGTAEESAEG. The disordered stretch occupies residues 223–246; it reads AGTAEESAEGAGKEATADDRTAVP. Residues 233 to 246 are compositionally biased toward basic and acidic residues; it reads AGKEATADDRTAVP.

It belongs to the P-Pant transferase superfamily. Gsp/Sfp/HetI/AcpT family.

The catalysed reaction is apo-[ACP] + CoA = holo-[ACP] + adenosine 3',5'-bisphosphate + H(+). Its function is as follows. Transfers the 4'-phosphopantetheine moiety from coenzyme A to a Ser of an acyl-carrier-protein. The enzyme is able to transfer the cofactor to a broad range of enzymes with acyl- or peptidyl-carrier protein domains. This chain is 4'-phosphopantetheinyl transferase Svp (svp), found in Streptomyces mobaraensis (Streptoverticillium mobaraense).